The sequence spans 92 residues: Transcriptional regulator WhiB1 (92 aa).

The 4Fe-4S Wbl-type domain maps to 12 to 74; that stretch reads ACRDKDPELF…GGLSEDERRA (63 aa). Positions 13, 41, 44, and 50 each coordinate [4Fe-4S] cluster.

It belongs to the WhiB family. It depends on [4Fe-4S] cluster as a cofactor. In terms of processing, the Fe-S cluster can be nitrosylated by nitric oxide (NO). Post-translationally, upon Fe-S cluster removal intramolecular disulfide bonds are formed.

It is found in the cytoplasm. In terms of biological role, acts as a transcriptional regulator. Probably redox-responsive. The apo- but not holo-form probably binds DNA. This Bifidobacterium longum (strain NCC 2705) protein is Transcriptional regulator WhiB1 (whiB1).